We begin with the raw amino-acid sequence, 82 residues long: Metallothionein (82 aa).

Residues Cys6, Cys8, Cys11, Cys13, Cys29, Cys33, His37, Cys43, Cys48, and Cys50 each coordinate Cd(2+). Residues Cys6, Cys8, and Cys11 each coordinate Zn(2+). Residues Cys29, Cys33, His37, Cys43, Cys48, and Cys50 each contribute to the Zn(2+) site. A disordered region spans residues 61-82 (ITNNQLDEALEETFPASDPISP).

This sequence belongs to the metallothionein superfamily.

Metallothioneins are small proteins that have a high content of cysteine residues which allow them to bind heavy metal ions through clusters of thiolate bonds. Preferentially, binds four Cd(2+) ions. Also binds three Zn(2+) ions but with less affinity. Required for long-term viability. May play a role in the storage or sequestration of metals when present in excess. The polypeptide is Metallothionein (Pseudomonas fluorescens (strain Q2-87)).